The sequence spans 211 residues: Uridine kinase (211 aa).

12-19 (GGSGGGKT) provides a ligand contact to ATP.

Belongs to the uridine kinase family.

The protein localises to the cytoplasm. It carries out the reaction uridine + ATP = UMP + ADP + H(+). The enzyme catalyses cytidine + ATP = CMP + ADP + H(+). It functions in the pathway pyrimidine metabolism; CTP biosynthesis via salvage pathway; CTP from cytidine: step 1/3. The protein operates within pyrimidine metabolism; UMP biosynthesis via salvage pathway; UMP from uridine: step 1/1. The polypeptide is Uridine kinase (Streptococcus thermophilus (strain CNRZ 1066)).